The sequence spans 186 residues: ATP synthase subunit b (186 aa).

Residues 5-25 (LILNLLVLLAPAAVFAAGGGH) form a helical membrane-spanning segment.

It belongs to the ATPase B chain family. F-type ATPases have 2 components, F(1) - the catalytic core - and F(0) - the membrane proton channel. F(1) has five subunits: alpha(3), beta(3), gamma(1), delta(1), epsilon(1). F(0) has three main subunits: a(1), b(2) and c(10-14). The alpha and beta chains form an alternating ring which encloses part of the gamma chain. F(1) is attached to F(0) by a central stalk formed by the gamma and epsilon chains, while a peripheral stalk is formed by the delta and b chains.

The protein localises to the cell inner membrane. In terms of biological role, f(1)F(0) ATP synthase produces ATP from ADP in the presence of a proton or sodium gradient. F-type ATPases consist of two structural domains, F(1) containing the extramembraneous catalytic core and F(0) containing the membrane proton channel, linked together by a central stalk and a peripheral stalk. During catalysis, ATP synthesis in the catalytic domain of F(1) is coupled via a rotary mechanism of the central stalk subunits to proton translocation. Functionally, component of the F(0) channel, it forms part of the peripheral stalk, linking F(1) to F(0). The chain is ATP synthase subunit b from Bdellovibrio bacteriovorus (strain ATCC 15356 / DSM 50701 / NCIMB 9529 / HD100).